A 459-amino-acid chain; its full sequence is UDP-N-acetylmuramoylalanine--D-glutamate ligase (459 aa).

131-137 (GANGKST) serves as a coordination point for ATP.

It belongs to the MurCDEF family.

It localises to the cytoplasm. The enzyme catalyses UDP-N-acetyl-alpha-D-muramoyl-L-alanine + D-glutamate + ATP = UDP-N-acetyl-alpha-D-muramoyl-L-alanyl-D-glutamate + ADP + phosphate + H(+). Its pathway is cell wall biogenesis; peptidoglycan biosynthesis. Cell wall formation. Catalyzes the addition of glutamate to the nucleotide precursor UDP-N-acetylmuramoyl-L-alanine (UMA). The polypeptide is UDP-N-acetylmuramoylalanine--D-glutamate ligase (Methylococcus capsulatus (strain ATCC 33009 / NCIMB 11132 / Bath)).